A 515-amino-acid chain; its full sequence is Bifunctional purine biosynthesis protein PurH (515 aa).

An MGS-like domain is found at 1–145 (MTKRALISVS…KNHASVTVVV (145 aa)).

The protein belongs to the PurH family.

It catalyses the reaction (6R)-10-formyltetrahydrofolate + 5-amino-1-(5-phospho-beta-D-ribosyl)imidazole-4-carboxamide = 5-formamido-1-(5-phospho-D-ribosyl)imidazole-4-carboxamide + (6S)-5,6,7,8-tetrahydrofolate. The catalysed reaction is IMP + H2O = 5-formamido-1-(5-phospho-D-ribosyl)imidazole-4-carboxamide. It participates in purine metabolism; IMP biosynthesis via de novo pathway; 5-formamido-1-(5-phospho-D-ribosyl)imidazole-4-carboxamide from 5-amino-1-(5-phospho-D-ribosyl)imidazole-4-carboxamide (10-formyl THF route): step 1/1. The protein operates within purine metabolism; IMP biosynthesis via de novo pathway; IMP from 5-formamido-1-(5-phospho-D-ribosyl)imidazole-4-carboxamide: step 1/1. The polypeptide is Bifunctional purine biosynthesis protein PurH (Streptococcus equi subsp. zooepidemicus (strain H70)).